The sequence spans 624 residues: Interleukin-1 receptor-associated kinase-like 2 (624 aa).

One can recognise a Death domain in the interval 13–94; it reads LDDLCRNIDT…RAAQIVLSWK (82 aa). Residues 210–475 enclose the Protein kinase domain; the sequence is FDQSHRISEG…LPEACAETWA (266 aa). ATP contacts are provided by residues 216–224, Lys-237, and 337–340; these read ISEGTFADI and KSAN. Disordered stretches follow at residues 508-536 and 549-593; these read SLPW…NSSL and RVSS…ETSW. Residues 558 to 577 are compositionally biased toward polar residues; it reads GNGTAQPSTSGRQEADSSSE.

Belongs to the protein kinase superfamily. TKL Ser/Thr protein kinase family. Pelle subfamily. As to quaternary structure, interacts with MYD88. IL-1 stimulation leads to the formation of a signaling complex which dissociates from the IL-1 receptor following the binding of PELI1.

Its function is as follows. Binds to the IL-1 type I receptor following IL-1 engagement, triggering intracellular signaling cascades leading to transcriptional up-regulation and mRNA stabilization. The polypeptide is Interleukin-1 receptor-associated kinase-like 2 (Irak2) (Rattus norvegicus (Rat)).